The chain runs to 304 residues: UDP-3-O-acyl-N-acetylglucosamine deacetylase (304 aa).

Positions 78, 237, and 241 each coordinate Zn(2+). His-264 functions as the Proton donor in the catalytic mechanism.

This sequence belongs to the LpxC family. The cofactor is Zn(2+).

It catalyses the reaction a UDP-3-O-[(3R)-3-hydroxyacyl]-N-acetyl-alpha-D-glucosamine + H2O = a UDP-3-O-[(3R)-3-hydroxyacyl]-alpha-D-glucosamine + acetate. The protein operates within glycolipid biosynthesis; lipid IV(A) biosynthesis; lipid IV(A) from (3R)-3-hydroxytetradecanoyl-[acyl-carrier-protein] and UDP-N-acetyl-alpha-D-glucosamine: step 2/6. Its function is as follows. Catalyzes the hydrolysis of UDP-3-O-myristoyl-N-acetylglucosamine to form UDP-3-O-myristoylglucosamine and acetate, the committed step in lipid A biosynthesis. The chain is UDP-3-O-acyl-N-acetylglucosamine deacetylase from Alcanivorax borkumensis (strain ATCC 700651 / DSM 11573 / NCIMB 13689 / SK2).